Consider the following 71-residue polypeptide: Lysis protein (71 aa).

The segment at 1–24 is disordered; the sequence is MQQPSQPTRESTKKPVPFQHEEYP. A helical membrane pass occupies residues 34-56; it reads LYVLICLAIFLSKFTNQLLASLL.

It belongs to the Leviviricetes lysis protein family.

The protein resides in the host cell inner membrane. It localises to the host cell outer membrane. In terms of biological role, induces the formation of specific membrane adhesion sites between the inner and outer membranes, apparently leading to host cell lysis. Lysis may be performed via activation of host murein hydrolases. This chain is Lysis protein, found in Enterobacteria phage fr (Bacteriophage fr).